Reading from the N-terminus, the 139-residue chain is Protein Turandot B (139 aa).

A signal peptide spans 1–21 (MNFKTALICFALLLIGTLCSA).

This sequence belongs to the Turandot family.

Its subcellular location is the secreted. Its function is as follows. A humoral factor that may play a role in stress tolerance. The polypeptide is Protein Turandot B (Drosophila sechellia (Fruit fly)).